A 935-amino-acid chain; its full sequence is Isoleucine--tRNA ligase (935 aa).

Residues P58–H68 carry the 'HIGH' region motif. E558 provides a ligand contact to L-isoleucyl-5'-AMP. A 'KMSKS' region motif is present at residues K599–S603. K602 is a binding site for ATP. Zn(2+)-binding residues include C897, C900, C917, and C920.

This sequence belongs to the class-I aminoacyl-tRNA synthetase family. IleS type 1 subfamily. In terms of assembly, monomer. The cofactor is Zn(2+).

The protein localises to the cytoplasm. The catalysed reaction is tRNA(Ile) + L-isoleucine + ATP = L-isoleucyl-tRNA(Ile) + AMP + diphosphate. Catalyzes the attachment of isoleucine to tRNA(Ile). As IleRS can inadvertently accommodate and process structurally similar amino acids such as valine, to avoid such errors it has two additional distinct tRNA(Ile)-dependent editing activities. One activity is designated as 'pretransfer' editing and involves the hydrolysis of activated Val-AMP. The other activity is designated 'posttransfer' editing and involves deacylation of mischarged Val-tRNA(Ile). This Francisella philomiragia subsp. philomiragia (strain ATCC 25017 / CCUG 19701 / FSC 153 / O#319-036) protein is Isoleucine--tRNA ligase.